Reading from the N-terminus, the 335-residue chain is Aspartate carbamoyltransferase catalytic subunit (335 aa).

Positions 54 and 55 each coordinate carbamoyl phosphate. Residue K82 coordinates L-aspartate. Carbamoyl phosphate-binding residues include R104, H134, and Q137. Positions 177 and 232 each coordinate L-aspartate. Residues G277 and P278 each coordinate carbamoyl phosphate.

Belongs to the aspartate/ornithine carbamoyltransferase superfamily. ATCase family. In terms of assembly, heterododecamer (2C3:3R2) of six catalytic PyrB chains organized as two trimers (C3), and six regulatory PyrI chains organized as three dimers (R2).

The enzyme catalyses carbamoyl phosphate + L-aspartate = N-carbamoyl-L-aspartate + phosphate + H(+). It functions in the pathway pyrimidine metabolism; UMP biosynthesis via de novo pathway; (S)-dihydroorotate from bicarbonate: step 2/3. Functionally, catalyzes the condensation of carbamoyl phosphate and aspartate to form carbamoyl aspartate and inorganic phosphate, the committed step in the de novo pyrimidine nucleotide biosynthesis pathway. This is Aspartate carbamoyltransferase catalytic subunit from Paenarthrobacter aurescens (strain TC1).